The primary structure comprises 367 residues: Probable cinnamyl alcohol dehydrogenase (367 aa).

Cysteine 47 is a binding site for Zn(2+). Threonine 49 provides a ligand contact to NADP(+). Zn(2+) is bound by residues histidine 69, glutamate 70, cysteine 100, cysteine 103, cysteine 106, cysteine 114, and cysteine 163. NADP(+) is bound by residues threonine 167, 188-193, 211-216, threonine 251, glycine 275, and 298-300; these read GLGGVG, SSSSKK, and SFI.

It belongs to the zinc-containing alcohol dehydrogenase family. In terms of assembly, homodimer. Zn(2+) serves as cofactor.

The catalysed reaction is (E)-cinnamyl alcohol + NADP(+) = (E)-cinnamaldehyde + NADPH + H(+). It carries out the reaction (E)-coniferol + NADP(+) = (E)-coniferaldehyde + NADPH + H(+). It catalyses the reaction (E)-sinapyl alcohol + NADP(+) = (E)-sinapaldehyde + NADPH + H(+). The enzyme catalyses (E)-4-coumaroyl alcohol + NADP(+) = (E)-4-coumaraldehyde + NADPH + H(+). The catalysed reaction is (E)-caffeyl alcohol + NADP(+) = (E)-caffeyl aldehyde + NADPH + H(+). The protein operates within aromatic compound metabolism; phenylpropanoid biosynthesis. In terms of biological role, involved in lignin biosynthesis. May catalyze the final step specific for the production of lignin monomers, like coniferyl alcohol, sinapyl alcohol and 4-coumaryl alcohol. This chain is Probable cinnamyl alcohol dehydrogenase, found in Zea mays (Maize).